We begin with the raw amino-acid sequence, 275 residues long: Lectin (275 aa).

The signal sequence occupies residues M1 to S30. The D-glucose site is built by D111 and G129. Residues E149 and D151 each contribute to the Mn(2+) site. Ca(2+)-binding residues include D151, F153, N155, and D159. The Mn(2+) site is built by D159 and H166. The propeptide occupies N211–N217. G246 and A247 together coordinate D-glucose. Residues K270–A275 constitute a propeptide that is removed on maturation.

Belongs to the leguminous lectin family. As to quaternary structure, heterotetramer of two alpha and two beta chains. In terms of processing, the mature form consists of two chains, alpha and beta, produced by cleavage of the immature protein. These remain cleaved, yet fold together to form one subunit.

Its function is as follows. D-mannose specific lectin. This chain is Lectin, found in Lens culinaris (Lentil).